A 572-amino-acid chain; its full sequence is Hemagglutinin-neuraminidase (572 aa).

The Intravirion portion of the chain corresponds to 1 to 31 (MEYWKHTNHGKDACNELGTSMATHGNKITNK). A helical transmembrane segment spans residues 32 to 52 (ITYILWTIILVLLSIIFIIVL). Residues 53-572 (INSIKSEKAH…FKTEIPKSCS (520 aa)) are Virion surface-facing. 2 cysteine pairs are disulfide-bonded: Cys190–Cys214 and Cys256–Cys269. An involved in neuraminidase activity region spans residues 252–257 (NRKSCS). Asn308 and Asn351 each carry an N-linked (GlcNAc...) asparagine; by host glycan. 2 disulfides stabilise this stretch: Cys355/Cys469 and Cys463/Cys473. Residue Asn523 is glycosylated (N-linked (GlcNAc...) asparagine; by host). Cys535 and Cys544 are oxidised to a cystine.

It belongs to the paramyxoviruses hemagglutinin-neuraminidase family. In terms of assembly, homotetramer; composed of disulfide-linked homodimers. Interacts with F protein trimer.

The protein resides in the virion membrane. The protein localises to the host cell membrane. It catalyses the reaction Hydrolysis of alpha-(2-&gt;3)-, alpha-(2-&gt;6)-, alpha-(2-&gt;8)- glycosidic linkages of terminal sialic acid residues in oligosaccharides, glycoproteins, glycolipids, colominic acid and synthetic substrates.. Attaches the virus to sialic acid-containing cell receptors and thereby initiating infection. Binding of HN protein to the receptor induces a conformational change that allows the F protein to trigger virion/cell membranes fusion. In terms of biological role, neuraminidase activity ensures the efficient spread of the virus by dissociating the mature virions from the neuraminic acid containing glycoproteins. The polypeptide is Hemagglutinin-neuraminidase (HN) (Homo sapiens (Human)).